The primary structure comprises 176 residues: Cytochrome b (176 aa).

A run of 3 helical transmembrane segments spans residues 33–53, 77–98, and 113–133; these read FGSL…FLAM, WLLR…YLHI, and WNVG…GYVL. Residues His83 and His97 each contribute to the heme b site.

The protein belongs to the cytochrome b family. As to quaternary structure, the cytochrome bc1 complex contains 11 subunits: 3 respiratory subunits (MT-CYB, CYC1 and UQCRFS1), 2 core proteins (UQCRC1 and UQCRC2) and 6 low-molecular weight proteins (UQCRH/QCR6, UQCRB/QCR7, UQCRQ/QCR8, UQCR10/QCR9, UQCR11/QCR10 and a cleavage product of UQCRFS1). This cytochrome bc1 complex then forms a dimer. The cofactor is heme b.

The protein localises to the mitochondrion inner membrane. Functionally, component of the ubiquinol-cytochrome c reductase complex (complex III or cytochrome b-c1 complex) that is part of the mitochondrial respiratory chain. The b-c1 complex mediates electron transfer from ubiquinol to cytochrome c. Contributes to the generation of a proton gradient across the mitochondrial membrane that is then used for ATP synthesis. In Nyctinomops aurispinosus (Peale's free-tailed bat), this protein is Cytochrome b (MT-CYB).